A 510-amino-acid polypeptide reads, in one-letter code: 2-isopropylmalate synthase (510 aa).

Residues L5–V267 form the Pyruvate carboxyltransferase domain. Mn(2+) is bound by residues D14, H202, H204, and N238. Positions K392–V510 are regulatory domain.

It belongs to the alpha-IPM synthase/homocitrate synthase family. LeuA type 1 subfamily. Homodimer. Mn(2+) serves as cofactor.

It localises to the cytoplasm. The enzyme catalyses 3-methyl-2-oxobutanoate + acetyl-CoA + H2O = (2S)-2-isopropylmalate + CoA + H(+). Its pathway is amino-acid biosynthesis; L-leucine biosynthesis; L-leucine from 3-methyl-2-oxobutanoate: step 1/4. Its function is as follows. Catalyzes the condensation of the acetyl group of acetyl-CoA with 3-methyl-2-oxobutanoate (2-ketoisovalerate) to form 3-carboxy-3-hydroxy-4-methylpentanoate (2-isopropylmalate). This Nitrosospira multiformis (strain ATCC 25196 / NCIMB 11849 / C 71) protein is 2-isopropylmalate synthase.